A 468-amino-acid polypeptide reads, in one-letter code: UDP-N-acetylmuramoylalanine--D-glutamate ligase (468 aa).

An ATP-binding site is contributed by 117–123 (GTDGKTT).

This sequence belongs to the MurCDEF family.

It localises to the cytoplasm. The enzyme catalyses UDP-N-acetyl-alpha-D-muramoyl-L-alanine + D-glutamate + ATP = UDP-N-acetyl-alpha-D-muramoyl-L-alanyl-D-glutamate + ADP + phosphate + H(+). It functions in the pathway cell wall biogenesis; peptidoglycan biosynthesis. Functionally, cell wall formation. Catalyzes the addition of glutamate to the nucleotide precursor UDP-N-acetylmuramoyl-L-alanine (UMA). The sequence is that of UDP-N-acetylmuramoylalanine--D-glutamate ligase from Chloroherpeton thalassium (strain ATCC 35110 / GB-78).